The sequence spans 463 residues: Cytidylate cyclase (463 aa).

The Guanylate cyclase domain occupies 122–231; the sequence is VTMFMDIIGS…IGIRIGIDLG (110 aa). Residue Phe-125 participates in a ribonucleoside 5'-triphosphate binding. Mn(2+) contacts are provided by Asp-127, Ile-128, and Asp-171. Residues 334–454 are AGS-C domain; sequence KPSRIKVVIS…VISNDTVIER (121 aa).

This sequence belongs to the adenylyl cyclase class-4/guanylyl cyclase family. Pyrimidine cyclase subfamily. As to quaternary structure, homodimer. The cofactor is Mn(2+).

The protein localises to the cytoplasm. The catalysed reaction is CTP = 3',5'-cyclic CMP + diphosphate. Its function is as follows. Pycsar (pyrimidine cyclase system for antiphage resistance) provides immunity against bacteriophage. The pyrimidine cyclase (PycC) synthesizes cyclic nucleotides in response to infection; these serve as specific second messenger signals. The signal activates the adjacent effector, leading to bacterial cell death and abortive phage infection. A clade E Pycsar system. In terms of biological role, the pyrimidine cyclase gene of a two-gene Pycsar system, generates cyclic CMP (cCMP) from CTP in response to bacteriophage infection. Has little to no activity on ATP, GTP or UTP. Expression of this and adjacent effector Ec303145PycTM (AC P0DV27) confers resistance to bacteriophage P1, T5, lambda-vir and phi27. The sequence is that of Cytidylate cyclase from Escherichia coli.